The sequence spans 250 residues: MSLRVNFSSEQAFLAQYQKSDYPSPLMTVDMAIFSVDQGQLQILLIQRSNYPQKSYWALPGGFVDLEQDQNLMACAHRKLLEKTGIDSPYLEQVASIGNAKRDPRGWSVTVLYFALINFKAYQQQIQHSEHSEWVTLEQALKLDLAFDHHDLLQQAFARLNNKTRYTALPISLMPPLFTLTELQNIYEIILGHNLEKKAFRRRMIESGVVEETDQSKIAGKRPAQLYRFALQDYDFNFPRMLEYPRHHED.

One can recognise a Nudix hydrolase domain in the interval 26–157 (LMTVDMAIFS…DHHDLLQQAF (132 aa)). A Nudix box motif is present at residues 62–85 (GFVDLEQDQNLMACAHRKLLEKTG). The interval 164-237 (TRYTALPISL…RFALQDYDFN (74 aa)) is winged helix-like DNA-binding region.

Its activity is regulated as follows. DNA binding is efficiently suppressed in the presence of ADP-ribose (ADPR) or phospho-ADPR. Accumulation of ADPR resulting from NAD degradation may be interpreted by the cell as a signal to activate recycling of nicotinamide. In terms of biological role, involved in the transcriptional regulation of the nondeamidating salvage pathway for production of NAD from nicotinamide. Represses expression of the prs-nadV-nrtR operon by binding to the DNA region located upstream of the operon, thus blocking the nondeamidating pathway. This is ADPR responsive transcriptional repressor NtrR from Acinetobacter baylyi (strain ATCC 33305 / BD413 / ADP1).